Reading from the N-terminus, the 419-residue chain is MDSKYDTLIYNVRIASMQHNGMPYGELPPTAIAIKEGHIVALLSCDEQLNDALQQTSTVIDGSRLIPCNENEQPTLPWLLPGFIDCHTHLVYGGNRAEEFEMRLQGASYVEIAERGGGIKGTVKKTRQADEQTLLNTAIKRAMRLCEEGVTTIEVKSGYGLDVDTEIRMLSVAKSLEKHLPVTIQTTYLGAHALPNEFNHDADAYIDFICRDALPQIASLGLADAVDVFCETIGFSLQQTERVFSCAKQYGLPVKAHVEQLSDSKGAVLAAKYGALSVDHIEYLVDSDIPSLVKSETVAVLLPGAFYYLSEVQKPPVEALRAHNVPIAVATDFNPGSSPLASLLTALNMSCVLFKLTPEEALRGATEHAASALGLNDRGVVDIGNVADLTLWDIETPAELVYCINGHRPIAVFKDGKHV.

Fe(3+) contacts are provided by His87 and His89. His87 and His89 together coordinate Zn(2+). Residues Arg96, Tyr159, and His192 each contribute to the 4-imidazolone-5-propanoate site. Tyr159 contacts N-formimidoyl-L-glutamate. A Fe(3+)-binding site is contributed by His257. Residue His257 coordinates Zn(2+). Gln260 contributes to the 4-imidazolone-5-propanoate binding site. Position 332 (Asp332) interacts with Fe(3+). Position 332 (Asp332) interacts with Zn(2+). N-formimidoyl-L-glutamate-binding residues include Asn334 and Gly336. A 4-imidazolone-5-propanoate-binding site is contributed by Ser337.

The protein belongs to the metallo-dependent hydrolases superfamily. HutI family. Requires Zn(2+) as cofactor. It depends on Fe(3+) as a cofactor.

It is found in the cytoplasm. The enzyme catalyses 4-imidazolone-5-propanoate + H2O = N-formimidoyl-L-glutamate. It functions in the pathway amino-acid degradation; L-histidine degradation into L-glutamate; N-formimidoyl-L-glutamate from L-histidine: step 3/3. Its function is as follows. Catalyzes the hydrolytic cleavage of the carbon-nitrogen bond in imidazolone-5-propanoate to yield N-formimidoyl-L-glutamate. It is the third step in the universal histidine degradation pathway. The protein is Imidazolonepropionase of Alteromonas mediterranea (strain DSM 17117 / CIP 110805 / LMG 28347 / Deep ecotype).